The chain runs to 206 residues: Large ribosomal subunit protein bL25 (206 aa).

A disordered region spans residues 184–206 (AEEAAAEVAEPEVIKKGKEEEEE). Over residues 195–206 (EVIKKGKEEEEE) the composition is skewed to basic and acidic residues.

It belongs to the bacterial ribosomal protein bL25 family. CTC subfamily. Part of the 50S ribosomal subunit; part of the 5S rRNA/L5/L18/L25 subcomplex. Contacts the 5S rRNA. Binds to the 5S rRNA independently of L5 and L18.

This is one of the proteins that binds to the 5S RNA in the ribosome where it forms part of the central protuberance. This is Large ribosomal subunit protein bL25 from Thermus thermophilus (strain ATCC BAA-163 / DSM 7039 / HB27).